A 153-amino-acid chain; its full sequence is Cystatin-9 (153 aa).

Positions M1–T27 are cleaved as a signal peptide.

The protein belongs to the cystatin family.

The protein localises to the secreted. Functionally, may play a role in hematopoietic differentiation or inflammation. The sequence is that of Cystatin-9 (CST9) from Bos taurus (Bovine).